The following is a 303-amino-acid chain: Acetaldehyde dehydrogenase (303 aa).

Residue 13-16 participates in NAD(+) binding; sequence SGNI. Cys-128 acts as the Acyl-thioester intermediate in catalysis. NAD(+)-binding positions include 159-167 and Asn-278; that span reads SAGPGTRQN.

It belongs to the acetaldehyde dehydrogenase family.

It carries out the reaction acetaldehyde + NAD(+) + CoA = acetyl-CoA + NADH + H(+). The chain is Acetaldehyde dehydrogenase from Chloroflexus aggregans (strain MD-66 / DSM 9485).